Reading from the N-terminus, the 495-residue chain is Glycerol kinase (495 aa).

Thr-11 is an ADP binding site. The ATP site is built by Thr-11, Thr-12, and Ser-13. Thr-11 is a sn-glycerol 3-phosphate binding site. Residue Arg-15 participates in ADP binding. Residues Arg-81, Glu-82, Tyr-133, and Asp-242 each contribute to the sn-glycerol 3-phosphate site. Arg-81, Glu-82, Tyr-133, Asp-242, and Gln-243 together coordinate glycerol. ADP-binding residues include Thr-264 and Gly-307. ATP contacts are provided by Thr-264, Gly-307, Gln-311, and Gly-408. Gly-408 lines the ADP pocket.

It belongs to the FGGY kinase family.

It catalyses the reaction glycerol + ATP = sn-glycerol 3-phosphate + ADP + H(+). It participates in polyol metabolism; glycerol degradation via glycerol kinase pathway; sn-glycerol 3-phosphate from glycerol: step 1/1. Inhibited by fructose 1,6-bisphosphate (FBP). Key enzyme in the regulation of glycerol uptake and metabolism. Catalyzes the phosphorylation of glycerol to yield sn-glycerol 3-phosphate. This is Glycerol kinase from Geobacter sp. (strain M21).